The sequence spans 844 residues: Receptor-like protein 49 (844 aa).

A signal peptide spans M1–A31. The Extracellular portion of the chain corresponds to K32–Q803. N59, N95, N112, and N159 each carry an N-linked (GlcNAc...) asparagine glycan. LRR repeat units lie at residues Q102–G126, L136–L160, S161–N183, N185–L208, S209–N231, L242–S265, L266–I290, S292–S313, S315–P339, Y345–P362, S363–Q385, T386–L409, P410–G434, G436–V457, D458–L481, D482–N504, H506–S527, D528–C551, A553–L574, L575–F601, P602–P625, F665–L689, K690–L713, S714–L737, and F739–T762. A glycan (N-linked (GlcNAc...) asparagine) is linked at N207. The N-linked (GlcNAc...) asparagine glycan is linked to N262. The N-linked (GlcNAc...) asparagine glycan is linked to N310. N374 and N384 each carry an N-linked (GlcNAc...) asparagine glycan. Residue N416 is glycosylated (N-linked (GlcNAc...) asparagine). Residues N493, N516, and N550 are each glycosylated (N-linked (GlcNAc...) asparagine). 2 N-linked (GlcNAc...) asparagine glycosylation sites follow: N696 and N712. The N-linked (GlcNAc...) asparagine glycan is linked to N744. Residues V804–I824 traverse the membrane as a helical segment. Residues G825–T844 lie on the Cytoplasmic side of the membrane.

This sequence belongs to the RLP family.

It is found in the cell membrane. The polypeptide is Receptor-like protein 49 (Arabidopsis thaliana (Mouse-ear cress)).